Consider the following 396-residue polypeptide: Flavohemoprotein (396 aa).

The Globin domain maps to 1-136 (MLDNQTIATV…LADIFINREE (136 aa)). A heme b-binding site is contributed by H85. Catalysis depends on charge relay system residues Y95 and E135. The tract at residues 147–396 (GGWRGLRPFR…YECFGPHKVI (250 aa)) is reductase. One can recognise an FAD-binding FR-type domain in the interval 150–255 (RGLRPFRINR…TAPRGDFFLD (106 aa)). FAD is bound by residues Y188 and 204–207 (RQYS). Position 268–273 (268–273 (GVGLTP)) interacts with NADP(+). 389–392 (CFGP) contributes to the FAD binding site.

Belongs to the globin family. Two-domain flavohemoproteins subfamily. It in the C-terminal section; belongs to the flavoprotein pyridine nucleotide cytochrome reductase family. Heme b serves as cofactor. The cofactor is FAD.

It carries out the reaction 2 nitric oxide + NADPH + 2 O2 = 2 nitrate + NADP(+) + H(+). The enzyme catalyses 2 nitric oxide + NADH + 2 O2 = 2 nitrate + NAD(+) + H(+). In terms of biological role, is involved in NO detoxification in an aerobic process, termed nitric oxide dioxygenase (NOD) reaction that utilizes O(2) and NAD(P)H to convert NO to nitrate, which protects the bacterium from various noxious nitrogen compounds. Therefore, plays a central role in the inducible response to nitrosative stress. This is Flavohemoprotein from Photorhabdus laumondii subsp. laumondii (strain DSM 15139 / CIP 105565 / TT01) (Photorhabdus luminescens subsp. laumondii).